Here is a 508-residue protein sequence, read N- to C-terminus: Putative adenosylhomocysteinase 3 (508 aa).

At serine 4 the chain carries Phosphoserine. The tract at residues 24 to 81 is disordered; sequence DQKQEFNKRPTKIGRRSLSRSISQSSTDSYSSAASYTDSSDDETSPRDKQQKNSKGSS. Over residues 32-41 the composition is skewed to basic residues; it reads RPTKIGRRSL. Residues 42 to 61 are compositionally biased toward low complexity; the sequence is SRSISQSSTDSYSSAASYTD. Residues serine 46, serine 49, serine 52, and serine 55 each carry the phosphoserine modification. Substrate contacts are provided by threonine 133, aspartate 207, and glutamate 232. Residue 233–235 participates in NAD(+) binding; the sequence is SVT. Positions 262 and 266 each coordinate substrate. Residues asparagine 267, 298-303, glutamate 319, asparagine 354, 375-377, and asparagine 422 contribute to the NAD(+) site; these read GEVGKG and IGH.

The protein belongs to the adenosylhomocysteinase family. In terms of assembly, homotetramer. Forms heteromultimers with AHCYL1 (via the C-terminal region). Interacts with ITPR1; with lower affinity than AHCYL1 and maybe via ITPR1. Interacts with SLC4A4. Interacts with ZCCHC4. Requires NAD(+) as cofactor.

Its subcellular location is the cytoplasm. The protein resides in the microsome. The catalysed reaction is S-adenosyl-L-homocysteine + H2O = L-homocysteine + adenosine. The protein operates within amino-acid biosynthesis; L-homocysteine biosynthesis; L-homocysteine from S-adenosyl-L-homocysteine: step 1/1. In terms of biological role, may regulate the electrogenic sodium/bicarbonate cotransporter SLC4A4 activity and Mg(2+)-sensitivity. On the contrary of its homolog AHCYL1, does not regulate ITPR1 sensitivity to inositol 1,4,5-trisphosphate. In Pongo abelii (Sumatran orangutan), this protein is Putative adenosylhomocysteinase 3 (AHCYL2).